Consider the following 794-residue polypeptide: Tail tubular protein gp12 (794 aa).

In terms of assembly, interacts with head-to-tail connector protein gp8, the tail component gp11, and the fiber protein gp17.

It is found in the virion. Functionally, structural component of the short non-contractile tail. The tail complex is involved in viral genome delivery. Forms the end of the tail, including the canonical tube, the nozzle, and the small extensions below the fibers. Once the tail tubular structure is formed, the interface between gp11 and gp12 generates the proper environment to interact with the six gp17 trimers. The protein is Tail tubular protein gp12 of Escherichia coli (Bacteriophage T7).